The sequence spans 377 residues: Succinyl-diaminopimelate desuccinylase (377 aa).

Position 68 (H68) interacts with Zn(2+). D70 is an active-site residue. D101 serves as a coordination point for Zn(2+). E135 functions as the Proton acceptor in the catalytic mechanism. Zn(2+) is bound by residues E136, E164, and H350.

The protein belongs to the peptidase M20A family. DapE subfamily. Homodimer. Zn(2+) serves as cofactor. It depends on Co(2+) as a cofactor.

It catalyses the reaction N-succinyl-(2S,6S)-2,6-diaminopimelate + H2O = (2S,6S)-2,6-diaminopimelate + succinate. Its pathway is amino-acid biosynthesis; L-lysine biosynthesis via DAP pathway; LL-2,6-diaminopimelate from (S)-tetrahydrodipicolinate (succinylase route): step 3/3. Functionally, catalyzes the hydrolysis of N-succinyl-L,L-diaminopimelic acid (SDAP), forming succinate and LL-2,6-diaminopimelate (DAP), an intermediate involved in the bacterial biosynthesis of lysine and meso-diaminopimelic acid, an essential component of bacterial cell walls. This is Succinyl-diaminopimelate desuccinylase from Acinetobacter baumannii (strain AB307-0294).